Here is a 445-residue protein sequence, read N- to C-terminus: Phosphoglucosamine mutase (445 aa).

The Phosphoserine intermediate role is filled by Ser-99. Mg(2+) contacts are provided by Ser-99, Asp-242, Asp-244, and Asp-246. Phosphoserine is present on Ser-99.

This sequence belongs to the phosphohexose mutase family. Requires Mg(2+) as cofactor. Post-translationally, activated by phosphorylation.

The catalysed reaction is alpha-D-glucosamine 1-phosphate = D-glucosamine 6-phosphate. Catalyzes the conversion of glucosamine-6-phosphate to glucosamine-1-phosphate. The polypeptide is Phosphoglucosamine mutase (Helicobacter pylori (strain G27)).